We begin with the raw amino-acid sequence, 317 residues long: Probable cell division protein WhiA (317 aa).

Positions 275–308 form a DNA-binding region, H-T-H motif; it reads SLKELGEMLVPKVGKSGVNHRMRKIDELAEKLEE.

It belongs to the WhiA family.

In terms of biological role, involved in cell division and chromosome segregation. In Desulfitobacterium hafniense (strain DSM 10664 / DCB-2), this protein is Probable cell division protein WhiA.